Consider the following 458-residue polypeptide: Monomethylamine methyltransferase MtmB1 (458 aa).

Position 202 (Pyl-202) is a non-standard amino acid, pyrrolysine.

This sequence belongs to the monomethylamine methyltransferase family.

The enzyme catalyses Co(I)-[methylamine-specific corrinoid protein] + methylamine + H(+) = methyl-Co(III)-[methylamine-specific corrinoid protein] + NH4(+). The protein operates within one-carbon metabolism; methanogenesis from methylamine. In terms of biological role, catalyzes the transfer of the methyl group from monomethylamine to the corrinoid cofactor of MtmC. This Methanosarcina barkeri (strain Fusaro / DSM 804) protein is Monomethylamine methyltransferase MtmB1 (mtmB1).